A 386-amino-acid chain; its full sequence is V-type proton ATPase subunit B 2 (386 aa).

This sequence belongs to the ATPase alpha/beta chains family. As to quaternary structure, V-ATPase is a heteromultimeric enzyme composed of a peripheral catalytic V1 complex (main components: subunits A, B, C, D, E, and F) attached to an integral membrane V0 proton pore complex (main component: the proteolipid protein).

In terms of biological role, non-catalytic subunit of the peripheral V1 complex of vacuolar ATPase. V-ATPase is responsible for acidifying a variety of intracellular compartments in eukaryotic cells. The protein is V-type proton ATPase subunit B 2 of Gossypium hirsutum (Upland cotton).